We begin with the raw amino-acid sequence, 401 residues long: Phosphoglycerate kinase (401 aa).

Substrate-binding positions include 23-25, R38, 61-64, R120, and R153; these read DLN and HFGR. ATP-binding positions include K203, E325, and 355–358; that span reads GGDT.

Belongs to the phosphoglycerate kinase family. Monomer.

Its subcellular location is the cytoplasm. It catalyses the reaction (2R)-3-phosphoglycerate + ATP = (2R)-3-phospho-glyceroyl phosphate + ADP. It participates in carbohydrate degradation; glycolysis; pyruvate from D-glyceraldehyde 3-phosphate: step 2/5. The polypeptide is Phosphoglycerate kinase (Rhizobium johnstonii (strain DSM 114642 / LMG 32736 / 3841) (Rhizobium leguminosarum bv. viciae)).